A 576-amino-acid polypeptide reads, in one-letter code: Type II restriction enzyme BsuRI (576 aa).

As to quaternary structure, monomer. Mg(2+) serves as cofactor.

The catalysed reaction is Endonucleolytic cleavage of DNA to give specific double-stranded fragments with terminal 5'-phosphates.. In terms of biological role, a P subtype restriction enzyme that recognizes the double-stranded sequence 5'-GGCC-3' and cleaves after G-2. This is Type II restriction enzyme BsuRI (hsdRR) from Bacillus subtilis.